The primary structure comprises 81 residues: Saposin-C (81 aa).

Positions E1–G81 constitute a Saposin B-type domain. Intrachain disulfides connect C5-C78, C8-C72, and C36-C47. A glycan (N-linked (GlcNAc...) asparagine) is linked at N22.

In terms of biological role, saposin-A and saposin-C stimulate the hydrolysis of glucosylceramide by beta-glucosylceramidase (EC 3.2.1.45) and galactosylceramide by beta-galactosylceramidase (EC 3.2.1.46). Saposin-C apparently acts by combining with the enzyme and acidic lipid to form an activated complex, rather than by solubilizing the substrate. The chain is Saposin-C (PSAP) from Cavia porcellus (Guinea pig).